The sequence spans 333 residues: Phosphate acyltransferase (333 aa).

It belongs to the PlsX family. As to quaternary structure, homodimer. Probably interacts with PlsY.

It is found in the cytoplasm. The catalysed reaction is a fatty acyl-[ACP] + phosphate = an acyl phosphate + holo-[ACP]. It functions in the pathway lipid metabolism; phospholipid metabolism. Its function is as follows. Catalyzes the reversible formation of acyl-phosphate (acyl-PO(4)) from acyl-[acyl-carrier-protein] (acyl-ACP). This enzyme utilizes acyl-ACP as fatty acyl donor, but not acyl-CoA. This is Phosphate acyltransferase from Enterococcus faecalis (strain ATCC 700802 / V583).